Reading from the N-terminus, the 334-residue chain is Geranylgeranyl pyrophosphate synthase ltmG (334 aa).

Isopentenyl diphosphate-binding residues include Lys-53, Arg-56, and His-85. 2 residues coordinate Mg(2+): Asp-92 and Asp-96. Residue Arg-101 participates in dimethylallyl diphosphate binding. Arg-102 lines the isopentenyl diphosphate pocket. Lys-179, Thr-180, and Gln-213 together coordinate dimethylallyl diphosphate. Asp-216 contributes to the Mg(2+) binding site. Residues Asn-220, Lys-230, and Lys-240 each contribute to the dimethylallyl diphosphate site.

This sequence belongs to the FPP/GGPP synthase family. It depends on Mg(2+) as a cofactor.

It catalyses the reaction isopentenyl diphosphate + dimethylallyl diphosphate = (2E)-geranyl diphosphate + diphosphate. It carries out the reaction isopentenyl diphosphate + (2E)-geranyl diphosphate = (2E,6E)-farnesyl diphosphate + diphosphate. The enzyme catalyses isopentenyl diphosphate + (2E,6E)-farnesyl diphosphate = (2E,6E,10E)-geranylgeranyl diphosphate + diphosphate. Its pathway is secondary metabolite biosynthesis. Geranylgeranyl pyrophosphate synthase; part of the gene cluster that mediates the biosynthesis of lolitrems, indole-diterpene mycotoxins that are potent tremorgens in mammals, and are synthesized by clavicipitaceous fungal endophytes in association with their grass hosts. The geranylgeranyl diphosphate (GGPP) synthase ltmG is proposed to catalyze the first step in lolitrem biosynthesis. LtmG catalyzes a series of iterative condensations of isopentenyl diphosphate (IPP) with dimethylallyl diphosphate (DMAPP), geranyl diphosphate (GPP), and farnesyl diphosphate (FPP), to form GGPP. GGPP then condenses with indole-3-glycerol phosphate to form 3-geranylgeranylindole, an acyclic intermediate, to be incorporated into paxilline. Either ltmG or ltmC could be responsible for this step, as both are putative prenyl transferases. The FAD-dependent monooxygenase ltmM then catalyzes the epoxidation of the two terminal alkenes of the geranylgeranyl moiety, which is subsequently cyclized by ltmB, to paspaline. The cytochrome P450 monooxygenases ltmQ and ltmP can sequentially oxidize paspaline to terpendole E and terpendole F. Alternatively, ltmP converts paspaline to an intermediate which is oxidized by ltmQ to terpendole F. LtmF, ltmK, ltmE and ltmJ appear to be unique to the epichloe endophytes. The prenyltransferase ltmF is involved in the 27-hydroxyl-O-prenylation. The cytochrome P450 monooxygenase ltmK is required for the oxidative acetal ring formation. The multi-functional prenyltransferase ltmE is required for C20- and C21-prenylations of the indole ring of paspalanes and acts together with the cytochrome P450 monooxygenase ltmJ to yield lolitremanes by multiple oxidations and ring closures. The stereoisomer pairs of lolitriol and lolitrem N or lolitrem B and lolitrem F may be attributed to variations in the way in which ring closure can occur under the action of ltmJ. While the major product of this pathway is lolitrem B, the prenyl transferases and cytochrome P450 monooxygenases identified in this pathway have a remarkable versatility in their regio- and stereo-specificities to generate a diverse range of metabolites that are products of a metabolic grid rather than a linear pathway. The sequence is that of Geranylgeranyl pyrophosphate synthase ltmG from Epichloe festucae (strain Fl1).